A 141-amino-acid polypeptide reads, in one-letter code: Large ribosomal subunit protein uL11 (141 aa).

Belongs to the universal ribosomal protein uL11 family. Part of the ribosomal stalk of the 50S ribosomal subunit. Interacts with L10 and the large rRNA to form the base of the stalk. L10 forms an elongated spine to which L12 dimers bind in a sequential fashion forming a multimeric L10(L12)X complex. In terms of processing, one or more lysine residues are methylated.

Functionally, forms part of the ribosomal stalk which helps the ribosome interact with GTP-bound translation factors. The sequence is that of Large ribosomal subunit protein uL11 from Petrotoga mobilis (strain DSM 10674 / SJ95).